The following is a 334-amino-acid chain: N-acetyl-gamma-glutamyl-phosphate reductase (334 aa).

Cys-154 is an active-site residue.

It belongs to the NAGSA dehydrogenase family. Type 1 subfamily.

Its subcellular location is the cytoplasm. It carries out the reaction N-acetyl-L-glutamate 5-semialdehyde + phosphate + NADP(+) = N-acetyl-L-glutamyl 5-phosphate + NADPH + H(+). It functions in the pathway amino-acid biosynthesis; L-arginine biosynthesis; N(2)-acetyl-L-ornithine from L-glutamate: step 3/4. Functionally, catalyzes the NADPH-dependent reduction of N-acetyl-5-glutamyl phosphate to yield N-acetyl-L-glutamate 5-semialdehyde. The polypeptide is N-acetyl-gamma-glutamyl-phosphate reductase (Vibrio vulnificus (strain YJ016)).